Reading from the N-terminus, the 340-residue chain is Glycerol-3-phosphate dehydrogenase [NAD(P)+] (340 aa).

NADPH is bound by residues S14, F15, R35, and K109. Sn-glycerol 3-phosphate-binding residues include K109 and G137. Position 141 (A141) interacts with NADPH. Residues K192, D245, S255, R256, and N257 each coordinate sn-glycerol 3-phosphate. K192 acts as the Proton acceptor in catalysis. R256 provides a ligand contact to NADPH. The NADPH site is built by V280 and E282.

Belongs to the NAD-dependent glycerol-3-phosphate dehydrogenase family.

It is found in the cytoplasm. The catalysed reaction is sn-glycerol 3-phosphate + NAD(+) = dihydroxyacetone phosphate + NADH + H(+). It carries out the reaction sn-glycerol 3-phosphate + NADP(+) = dihydroxyacetone phosphate + NADPH + H(+). It functions in the pathway membrane lipid metabolism; glycerophospholipid metabolism. In terms of biological role, catalyzes the reduction of the glycolytic intermediate dihydroxyacetone phosphate (DHAP) to sn-glycerol 3-phosphate (G3P), the key precursor for phospholipid synthesis. The chain is Glycerol-3-phosphate dehydrogenase [NAD(P)+] from Teredinibacter turnerae (strain ATCC 39867 / T7901).